A 354-amino-acid chain; its full sequence is Protein-glutamate methylesterase/protein-glutamine glutaminase of group 3 operon (354 aa).

The 119-residue stretch at 3-121 (RILLATSTVE…MQLEQPAIEK (119 aa)) folds into the Response regulatory domain. The region spanning 158–340 (PIGIVGIAAS…LESIAENITA (183 aa)) is the CheB-type methylesterase domain. Active-site residues include serine 167, histidine 194, and aspartate 287.

The protein belongs to the CheB family.

Its subcellular location is the cytoplasm. It catalyses the reaction [protein]-L-glutamate 5-O-methyl ester + H2O = L-glutamyl-[protein] + methanol + H(+). The enzyme catalyses L-glutaminyl-[protein] + H2O = L-glutamyl-[protein] + NH4(+). Involved in chemotaxis. Part of a chemotaxis signal transduction system that modulates chemotaxis in response to various stimuli. Catalyzes the demethylation of specific methylglutamate residues introduced into the chemoreceptors (methyl-accepting chemotaxis proteins or MCP) by CheR. Also mediates the irreversible deamidation of specific glutamine residues to glutamic acid. The polypeptide is Protein-glutamate methylesterase/protein-glutamine glutaminase of group 3 operon (Rhizobium meliloti (strain 1021) (Ensifer meliloti)).